A 312-amino-acid polypeptide reads, in one-letter code: 4-hydroxyphenylacetate decarboxylase activating enzyme (312 aa).

The 284-residue stretch at H16–D299 folds into the Radical SAM core domain. [4Fe-4S] cluster is bound by residues C30, C34, C37, C56, C62, C65, and C101. W36 to A38 serves as a coordination point for S-adenosyl-L-methionine. 4Fe-4S ferredoxin-type domains follow at residues K47–D79 and G80–E112. S-adenosyl-L-methionine-binding positions include G140, D189–K191, and H263.

The protein belongs to the organic radical-activating enzymes family. As to quaternary structure, monomer. [4Fe-4S] cluster serves as cofactor.

It carries out the reaction glycyl-[protein] + reduced [flavodoxin] + S-adenosyl-L-methionine = glycin-2-yl radical-[protein] + semiquinone [flavodoxin] + 5'-deoxyadenosine + L-methionine + H(+). Functionally, catalyzes activation of 4-hydroxyphenylacetate decarboxylase under anaerobic conditions by generation of an organic free radical on a glycine residue, via a homolytic cleavage of S-adenosyl-L-methionine (SAM). The chain is 4-hydroxyphenylacetate decarboxylase activating enzyme from Clostridium scatologenes.